A 196-amino-acid chain; its full sequence is Glycerol-3-phosphate acyltransferase (196 aa).

5 consecutive transmembrane segments (helical) span residues M1–T21, A53–L73, G78–F98, I112–I132, and L152–F172.

This sequence belongs to the PlsY family. Probably interacts with PlsX.

It is found in the cell membrane. The enzyme catalyses an acyl phosphate + sn-glycerol 3-phosphate = a 1-acyl-sn-glycero-3-phosphate + phosphate. It participates in lipid metabolism; phospholipid metabolism. Catalyzes the transfer of an acyl group from acyl-phosphate (acyl-PO(4)) to glycerol-3-phosphate (G3P) to form lysophosphatidic acid (LPA). This enzyme utilizes acyl-phosphate as fatty acyl donor, but not acyl-CoA or acyl-ACP. The sequence is that of Glycerol-3-phosphate acyltransferase from Carboxydothermus hydrogenoformans (strain ATCC BAA-161 / DSM 6008 / Z-2901).